The primary structure comprises 214 residues: ER lumen protein-retaining receptor 3 (214 aa).

The Lumenal portion of the chain corresponds to 1–4 (MNIF). A helical membrane pass occupies residues 5 to 24 (RILGDVSHLLAIIILLLKMW). Topologically, residues 25–32 (KSKSCAGI) are cytoplasmic. A helical transmembrane segment spans residues 33-52 (SGKSQLLFALVFTTRYLDLF). Residues 47-48 (RY) form an interaction with the K-D-E-L motif on target proteins region. Over 53–58 (TVFISP) the chain is Lumenal. The chain crosses the membrane as a helical span at residues 59-79 (YNTVMKIIFLACAYVTVYLIY). The Cytoplasmic portion of the chain corresponds to 80 to 92 (GKLRKSYDSENDT). A helical membrane pass occupies residues 93–110 (FRLEFLLVPVIGLSFLEN). Residues 111 to 116 (YEFTPL) are Lumenal-facing. The chain crosses the membrane as a helical span at residues 117-135 (EILWTFSIYLESVAILPQL). The Cytoplasmic segment spans residues 136–149 (FMISKTGEAESITT). Residues 150–168 (HYLFFLGLYRVLYLANWIW) form a helical membrane-spanning segment. Positions 159–169 (RVLYLANWIWR) are interaction with the K-D-E-L motif on target proteins. Residues 169 to 178 (RYHTEKFYDQ) lie on the Lumenal side of the membrane. A helical transmembrane segment spans residues 179–199 (IAVVSGVVQTIFYFDFFYLYV). The Cytoplasmic portion of the chain corresponds to 200–214 (TKVLKGKKLSLPMPV). The segment at 204-207 (KGKK) is important for recycling of cargo proteins with the sequence motif K-D-E-L from the Golgi to the endoplasmic reticulum.

Belongs to the ERD2 family.

The protein resides in the endoplasmic reticulum membrane. The protein localises to the golgi apparatus membrane. Its subcellular location is the cytoplasmic vesicle. It is found in the COPI-coated vesicle membrane. Receptor for the C-terminal sequence motif K-D-E-L that is present on endoplasmic reticulum resident proteins and that mediates their recycling from the Golgi back to the endoplasmic reticulum. The polypeptide is ER lumen protein-retaining receptor 3 (kdelr3) (Xenopus laevis (African clawed frog)).